The chain runs to 357 residues: GTPase Obg (357 aa).

The Obg domain maps to 1–159; it reads MKFVDEAEIQ…RTLKLELKLL (159 aa). Residues 160-343 enclose the OBG-type G domain; sequence ADIGMLGFPN…IMKSAMTLFE (184 aa). Residues 166 to 173, 191 to 195, 213 to 216, 293 to 296, and 324 to 326 contribute to the GTP site; these read GFPNVGKS, FTTLY, DVPG, NKAD, and SAV. Positions 173 and 193 each coordinate Mg(2+).

Belongs to the TRAFAC class OBG-HflX-like GTPase superfamily. OBG GTPase family. In terms of assembly, monomer. Requires Mg(2+) as cofactor.

The protein resides in the cytoplasm. Its function is as follows. An essential GTPase which binds GTP, GDP and possibly (p)ppGpp with moderate affinity, with high nucleotide exchange rates and a fairly low GTP hydrolysis rate. Plays a role in control of the cell cycle, stress response, ribosome biogenesis and in those bacteria that undergo differentiation, in morphogenesis control. This Xylella fastidiosa (strain 9a5c) protein is GTPase Obg.